The chain runs to 309 residues: Protein FdhE (309 aa).

This sequence belongs to the FdhE family.

It is found in the cytoplasm. Functionally, necessary for formate dehydrogenase activity. The chain is Protein FdhE from Salmonella arizonae (strain ATCC BAA-731 / CDC346-86 / RSK2980).